We begin with the raw amino-acid sequence, 311 residues long: Malate dehydrogenase (311 aa).

NAD(+) is bound by residues 7–13 and aspartate 34; that span reads GAAGGIG. 2 residues coordinate substrate: arginine 81 and arginine 87. Residues asparagine 94 and 117–119 contribute to the NAD(+) site; that span reads ITN. Substrate-binding residues include asparagine 119 and arginine 153. Histidine 177 (proton acceptor) is an active-site residue. Methionine 227 is a binding site for NAD(+).

Belongs to the LDH/MDH superfamily. MDH type 1 family. Homodimer.

It catalyses the reaction (S)-malate + NAD(+) = oxaloacetate + NADH + H(+). Functionally, catalyzes the reversible oxidation of malate to oxaloacetate. This chain is Malate dehydrogenase, found in Pseudoalteromonas atlantica (strain T6c / ATCC BAA-1087).